A 101-amino-acid polypeptide reads, in one-letter code: Small ribosomal subunit protein uS14 (101 aa).

The protein belongs to the universal ribosomal protein uS14 family. Part of the 30S ribosomal subunit. Contacts proteins S3 and S10.

Its function is as follows. Binds 16S rRNA, required for the assembly of 30S particles and may also be responsible for determining the conformation of the 16S rRNA at the A site. This Salmonella schwarzengrund (strain CVM19633) protein is Small ribosomal subunit protein uS14.